A 155-amino-acid chain; its full sequence is Large ribosomal subunit protein eL24A (155 aa).

The residue at position 7 (S7) is a Phosphoserine. The disordered stretch occupies residues 66 to 155; sequence EVAKKRSRKT…AFQKVAATSR (90 aa). Positions 89–129 are enriched in basic and acidic residues; sequence LIKERRSLKPEVRKANREEKLKANKEKKKAEKAARKAEKAK. The span at 131 to 142 shows a compositional bias: polar residues; it reads AGTQSSKFSKQQ.

It belongs to the eukaryotic ribosomal protein eL24 family. As to quaternary structure, component of the large ribosomal subunit (LSU). Mature yeast ribosomes consist of a small (40S) and a large (60S) subunit. The 40S small subunit contains 1 molecule of ribosomal RNA (18S rRNA) and 33 different proteins (encoded by 57 genes). The large 60S subunit contains 3 rRNA molecules (25S, 5.8S and 5S rRNA) and 46 different proteins (encoded by 81 genes).

It is found in the cytoplasm. Component of the ribosome, a large ribonucleoprotein complex responsible for the synthesis of proteins in the cell. The small ribosomal subunit (SSU) binds messenger RNAs (mRNAs) and translates the encoded message by selecting cognate aminoacyl-transfer RNA (tRNA) molecules. The large subunit (LSU) contains the ribosomal catalytic site termed the peptidyl transferase center (PTC), which catalyzes the formation of peptide bonds, thereby polymerizing the amino acids delivered by tRNAs into a polypeptide chain. The nascent polypeptides leave the ribosome through a tunnel in the LSU and interact with protein factors that function in enzymatic processing, targeting, and the membrane insertion of nascent chains at the exit of the ribosomal tunnel. This chain is Large ribosomal subunit protein eL24A, found in Saccharomyces cerevisiae (strain ATCC 204508 / S288c) (Baker's yeast).